A 638-amino-acid chain; its full sequence is RNA exonuclease 3 (638 aa).

The segment at 37-136 is disordered; sequence AQDQVLEQKE…PPRRAPKEAL (100 aa). Residues 55–76 are compositionally biased toward basic and acidic residues; it reads LKLEPRPEAKETPKDDLRHVSD. Over residues 77–111 the composition is skewed to polar residues; the sequence is SGRSTPVKKTTAPATNAENISPVSRQPNIPKNTAT. An Exonuclease domain is found at 408-584; sequence ICFDCEMGYT…VEDALATGDL (177 aa). The span at 612–622 shows a compositional bias: polar residues; it reads DSSSNTVSMQT. The tract at residues 612-638 is disordered; sequence DSSSNTVSMQTKLGEGAGAKRAREGTS.

This sequence belongs to the REXO1/REXO3 family.

It is found in the cytoplasm. Its subcellular location is the nucleus. 3' to 5' exoribonuclease required for proper 3' end maturation of MRP RNA and of the U5L snRNA. This is RNA exonuclease 3 (rex3) from Emericella nidulans (strain FGSC A4 / ATCC 38163 / CBS 112.46 / NRRL 194 / M139) (Aspergillus nidulans).